We begin with the raw amino-acid sequence, 344 residues long: Geranylgeranyl transferase type-2 subunit alpha (344 aa).

6 PFTA repeats span residues 44–78, 89–123, 125–159, 165–199, 214–248, and 266–293; these read YSEGNLKLTTELLDWNPETYSVWNYRREILLNDVF, LLDNELKYVLSKMKVFPKVYWIFNHRRWCLENAPY, NWNYEMMITEKLLSADARNFHGWHYRRYVVSQIER, LAKKEMEYTTSAIATNFSNFSALHNRTKLIETILN, ILEQELDMIHQAVFTDPDDSSVWIYHRWLMGHCNP, and YLQKEIELIQELHEMEPENRWCCESLVN.

It belongs to the protein prenyltransferase subunit alpha family. Heterodimer of an alpha and a beta subunit.

The catalysed reaction is geranylgeranyl diphosphate + L-cysteinyl-[protein] = S-geranylgeranyl-L-cysteinyl-[protein] + diphosphate. Its function is as follows. Catalyzes the transfer of a geranyl-geranyl moiety from geranyl-geranyl pyrophosphate to proteins having the C-terminal-XCC or -XCXC, where both cysteines may become modified. The chain is Geranylgeranyl transferase type-2 subunit alpha (bet4) from Schizosaccharomyces pombe (strain 972 / ATCC 24843) (Fission yeast).